Consider the following 892-residue polypeptide: Inner centromere protein B (892 aa).

8 disordered regions span residues 50–124 (AEPE…KRMT), 160–182 (EHERRSAEQKLRESEIEDSEMKT), 255–286 (LVNEQPLNLSNESATPTGSKSDRRSVRRSLVV), 305–470 (KRES…PPPH), 502–555 (KRNT…RRED), 569–687 (QLEE…RERE), 702–760 (ERAA…AAAA), and 797–819 (NYGMDLNSDDSTDDESQPRKPIP). A compositionally biased stretch (basic residues) spans 60 to 69 (SQKRRRKKRT). The segment covering 90-99 (SANWSSSVRR) has biased composition (low complexity). A compositionally biased stretch (polar residues) spans 259–272 (QPLNLSNESATPTG). A compositionally biased stretch (basic and acidic residues) spans 305 to 315 (KRESMTREAVR). The segment covering 316-326 (KSIRQSISKKK) has biased composition (basic residues). A compositionally biased stretch (low complexity) spans 332–343 (SSTSSQRSCHSS). A compositionally biased stretch (basic and acidic residues) spans 431 to 444 (RAVDELSDDERPSE). The span at 455 to 470 (PSPPCPPSKIVKPPPH) shows a compositional bias: pro residues. Basic and acidic residues-rich tracts occupy residues 509–555 (PDPK…RRED), 569–602 (QLEEEKKKKFEQKFAQIDEKSEKVREDRMAEEKA), 609–687 (KKQE…RERE), and 702–754 (ERAA…KAKE). The segment at 512–725 (KSEEKERQRL…EERKKREQQQ (214 aa)) is SAH. An IN box region spans residues 802 to 876 (LNSDDSTDDE…RTSSAVWHSP (75 aa)). Serine 869 and serine 870 each carry phosphoserine.

It belongs to the INCENP family. As to quaternary structure, component of the CPC at least composed of survivin/birc5, incenp, cdca8/borealin and/or cdca9/dasra-A, and aurkb/aurora-B. Interacts (via C-terminus) with aurkb (via N-terminus and kinase domain). Interacts (via N-terminus) with birc5.1, birc5.2, cdca8 and cdca9. Interacts with mtus1.

The protein resides in the nucleus. It localises to the chromosome. The protein localises to the centromere. Its subcellular location is the cytoplasm. It is found in the cytoskeleton. The protein resides in the spindle. It localises to the midbody. The protein localises to the kinetochore. Component of the chromosomal passenger complex (CPC), a complex that acts as a key regulator of mitosis. The CPC complex has essential functions at the centromere in ensuring correct chromosome alignment and segregation and is required for chromatin-induced microtubule stabilization and spindle assembly. Acts as a scaffold regulating CPC localization and activity. The C-terminus associates with aurkb/aurora-B, the N-terminus associated with cdca8/borealin and/or cdca9/dasra-A tethers the CPC to the inner centromere, and the microtubule binding activity within the central SAH domain directs aurkb/aurora-B toward substrates near microtubules. Activates aurkb. The sequence is that of Inner centromere protein B (incenp-b) from Xenopus laevis (African clawed frog).